The following is a 373-amino-acid chain: Methylmalonyl-CoA decarboxylase subunit beta (373 aa).

A run of 10 helical transmembrane segments spans residues 17-37 (FLAFTTGNAIMILVGLILLYL), 38-58 (AFAREFEPLLLGPIAFGCLLA), 81-101 (IFPPLIFLGVGAMTDFGPLIA), 106-126 (LLLGAAAQIGVFAALGGAMML), 132-152 (EAAAIGIIGGADGPTSIYLAT), 156-176 (PHLLGAIAVAAYSYMSLVPLI), 206-226 (IVFPIVATIFISLLLPSITSL), 257-277 (VTIFLATGTGLTMSAEHFLSL), 280-300 (IKIILLGLFAFICGTAGGVLF), and 343-363 (FLLMHAMGPNVAGVIGTAVAA).

It belongs to the GcdB/MmdB/OadB family. As to quaternary structure, the methylmalonyl-CoA decarboxylase is composed of five subunits: the carboxyltransferase alpha subunit (MmdA), the tunnel beta subunit (MmdB), the biotin-containing gamma subunit (MmdC), and the delta (MmdD) and epsilon (MmdE) subunits. In terms of processing, the N-terminus is blocked.

Its subcellular location is the cell membrane. It carries out the reaction (S)-methylmalonyl-CoA + Na(+)(in) + H(+)(out) = propanoyl-CoA + Na(+)(out) + CO2. Its activity is regulated as follows. Completely inhibited by avidin. In terms of biological role, tunnel subunit of the sodium ion pump methylmalonyl-CoA decarboxylase, which converts the chemical energy of a decarboxylation reaction into an electrochemical gradient of Na(+) ions across the cytoplasmic membrane, thereby creating a sodium ion motive force that is used for ATP synthesis. The beta subunit catalyzes the decarboxylation of the carboxybiotin carrier protein and the coupled export of Na(+) ions. Can also convert malonyl-CoA into acetyl-CoA. The polypeptide is Methylmalonyl-CoA decarboxylase subunit beta (Veillonella parvula (Staphylococcus parvulus)).